The chain runs to 110 residues: Protein RALF-like 19 (110 aa).

A signal peptide spans 1-23 (MGIKILLILGLLTLAVVAESANA). Residues 24-58 (TWTLTKSCVNGQGCIGEDGELDYLMDSETNRRQLA) constitute a propeptide, removed in mature form. 2 disulfides stabilise this stretch: Cys76-Cys86 and Cys99-Cys105.

Belongs to the plant rapid alkalinization factor (RALF) family. In terms of processing, proteolytically cleaved, probably by S1P, a subtilisin-like serine protease (subtilase).

It localises to the secreted. Cell signaling peptide that may regulate plant stress, growth, and development. Mediates a rapid alkalinization of extracellular space by mediating a transient increase in the cytoplasmic Ca(2+) concentration leading to a calcium-dependent signaling events through a cell surface receptor and a concomitant activation of some intracellular mitogen-activated protein kinases. This chain is Protein RALF-like 19 (RALFL19), found in Arabidopsis thaliana (Mouse-ear cress).